We begin with the raw amino-acid sequence, 98 residues long: Leydig cell tumor 10 kDa protein homolog (98 aa).

2 disordered regions span residues M1–A38 and S73–A98. The segment covering S16–A25 has biased composition (low complexity). Residues R28 to A38 are compositionally biased toward basic residues. Over residues S73 to A83 the composition is skewed to low complexity.

Belongs to the UPF0390 family.

May have a potential role in hypercalcemia of malignancy. The chain is Leydig cell tumor 10 kDa protein homolog from Bos taurus (Bovine).